Reading from the N-terminus, the 796-residue chain is Cadherin-11 (796 aa).

Residues 1 to 22 form the signal peptide; that stretch reads MKENYCLQAALVCLGMLCHSHA. A propeptide spanning residues 23 to 53 is cleaved from the precursor; the sequence is FAPERRGHLRPSFHGHHEKGKEGQVLQRSKR. Cadherin domains lie at 54-159, 160-268, 269-383, 384-486, and 487-612; these read GWVW…PPEF, LHET…PPKF, PQSV…PPMF, LAPS…DNAP, and KFAA…YILN. The Extracellular segment spans residues 54-617; sequence GWVWNQFFVI…AYILNAGLST (564 aa). N-linked (GlcNAc...) asparagine glycans are attached at residues Asn455 and Asn540. Residues 618–640 form a helical membrane-spanning segment; sequence GALIAILACIVILLVIVVLFVTL. The Cytoplasmic segment spans residues 641 to 796; sequence RRQKKEPLIV…GSKDTFDDDS (156 aa). Phosphoserine is present on Ser788. The residue at position 791 (Thr791) is a Phosphothreonine.

As to quaternary structure, interacts with PCDH8. As to expression, expressed mainly in brain but also found in other tissues. Expressed in neuroblasts. In the embryo from 67 to 72 days of gestation, detected at high levels in facial mesenchyme including the central palatal mesenchyme, dental mesenchyme, the eye and optic muscle, and the tongue (at protein level).

Its subcellular location is the cell membrane. Functionally, cadherins are calcium-dependent cell adhesion proteins. They preferentially interact with themselves in a homophilic manner in connecting cells; cadherins may thus contribute to the sorting of heterogeneous cell types. Required for proper focal adhesion assembly. Involved in the regulation of cell migration. The protein is Cadherin-11 (CDH11) of Homo sapiens (Human).